Consider the following 309-residue polypeptide: GalNAc(5)-diNAcBac-PP-undecaprenol beta-1,3-glucosyltransferase (309 aa).

A helical transmembrane segment spans residues 273–291 (SLSIKINAPALILLILSII).

The protein belongs to the glycosyltransferase 2 family.

It localises to the membrane. The enzyme catalyses [alpha-D-GalNAc-(1-&gt;4)]4-alpha-D-GalNAc-(1-&gt;3)-alpha-D-diNAcBac-tri-trans,hepta-cis-undecaprenyl diphosphate + UDP-alpha-D-glucose = [alpha-D-GalNAc-(1-&gt;4)]2-[beta-D-Glc-(1-&gt;3)]-[alpha-D-GalNAc-(1-&gt;4)]2-alpha-D-GalNAc-(1-&gt;3)-alpha-D-diNAcBac-tri-trans,hepta-cis-undecaprenyl diphosphate + UDP + H(+). It participates in protein modification; protein glycosylation. Its function is as follows. Glucosyltransferase that adds he final branching glucose to complete the final heptasaccharide structure in the N-linked protein glycosylation pathway. This Campylobacter jejuni subsp. jejuni serotype O:2 (strain ATCC 700819 / NCTC 11168) protein is GalNAc(5)-diNAcBac-PP-undecaprenol beta-1,3-glucosyltransferase (pglI).